Reading from the N-terminus, the 697-residue chain is MGPDRKEVPLSRGTQAVVVGKGRGAPGDDSSMGGRPSSPLDKQQRQHLRGQVDTLLRNFLPCYRGQLAASVLRQISRELGPQEPTGSQLLRSKKLPRVREHRGPLTQLRGHPPRWQPIFCVLRGDGRLEWFSHKEEYENGGHCLGSTALTGYTLLTSQREYLRLLDALCPESLGDHTQEEPDSLLEVPVSFPLFLQHPFRRHLCFSAATREAQHAWRLALQGGIRLQGIVLQRSQAPAARAFLDAVRLYRQHQGHFGDDDVTLGSDAEVLTAVLMREQLPALRAQTLPGLRGAGRARAWAWTELLDAVHAAVLAGASAGLCAFQPEKDELLASLEKTIRPDVDQLLRQRARVAGRLRTDIRGPLESCLRREVDPQLPRVVQTLLRTVEASLEAVRTLLAQGMDRLSHRLRQSPSGTRLRREVYSFGEMPWDLALMQTCYREAERSRGRLGQLAAPFGFLGMQSLVFGAQDLAQQLMADAVATFLQLADQCLTTALNCDQAAQRLERVRGRVLKKFKSDSGLAQRRFIRGWGLCIFLPFVLSQLEPGCKKELPEFEGDVLAVGSQALTTEGIYEDVIRGCLLQRIDQELKKTLGANDVSCTLDGCLEVPWEQEGAAPNLNLVSSFLAGRQAFTDFLCLPAKSSANWILAASLLSCSCFRSGFHRDSRVFLVQLAEGLSHSLETVSSHSVWSFRPTPRQ.

The disordered stretch occupies residues 1–48 (MGPDRKEVPLSRGTQAVVVGKGRGAPGDDSSMGGRPSSPLDKQQRQHL).

The protein belongs to the Niban family. As to expression, specifically expressed in B-lymphocytes.

In Homo sapiens (Human), this protein is Protein Niban 3.